An 86-amino-acid polypeptide reads, in one-letter code: High affinity immunoglobulin epsilon receptor subunit gamma (86 aa).

A signal peptide spans 1–18 (MYPAVVLLLLLLVEQAAA). Topologically, residues 19–23 (LGEPQ) are extracellular. The chain crosses the membrane as a helical span at residues 24–44 (LCYILDAILFLYGIILTLLYC). The Cytoplasmic segment spans residues 45-86 (RLKIQVRKATVASYEKPDGIYTGLSTRNQETYETLKHEKPPQ). The ITAM domain maps to 54–82 (TVASYEKPDGIYTGLSTRNQETYETLKHE). A Phosphotyrosine modification is found at Y65. S69 is subject to Phosphoserine. Y76 carries the post-translational modification Phosphotyrosine. T78 carries the phosphothreonine modification.

Belongs to the CD3Z/FCER1G family. In terms of assembly, igE Fc receptor is a tetramer of an alpha chain, a beta chain, and two disulfide linked gamma chains. Associates with FCGR1A; forms a functional signaling complex. The signaling subunit of immunoglobulin gamma (IgG) Fc receptor complex. As a homodimer or a heterodimer of CD247 and FCER1G, associates with the ligand binding subunit FCGR3A to form a functional receptor complex. Associates with CLEC6A. Interacts with CLEC4E. Interacts (via ITAM domain) with SYK (via SH2 domains); activates SYK, enabling integrin-mediated activation of neutrophils and macrophages. Interacts with CSF2RB and recruits SYK in response to IL3 stimulation; this interaction is direct. Interacts with CD300LH; the interaction may be indirect. Interacts with CD300LD. Interacts with TARM1.

Its subcellular location is the cell membrane. In terms of biological role, adapter protein containing an immunoreceptor tyrosine-based activation motif (ITAM) that transduces activation signals from various immunoreceptors. As a component of the high-affinity immunoglobulin E (IgE) receptor, mediates allergic inflammatory signaling in mast cells. As a constitutive component of interleukin-3 receptor complex, selectively mediates interleukin 4/IL4 production by basophils priming T-cells toward effector T-helper 2 subset. Associates with pattern recognition receptors CLEC4D and CLEC4E to form a functional signaling complex in myeloid cells. Binding of mycobacterial trehalose 6,6'-dimycolate (TDM) to this receptor complex leads to phosphorylation of ITAM, triggering activation of SYK, CARD9 and NF-kappa-B, consequently driving maturation of antigen-presenting cells and shaping antigen-specific priming of T-cells toward effector T-helper 1 and T-helper 17 cell subtypes. May function cooperatively with other activating receptors. Functionally linked to integrin beta-2/ITGB2-mediated neutrophil activation. Also involved in integrin alpha-2/ITGA2-mediated platelet activation. The chain is High affinity immunoglobulin epsilon receptor subunit gamma (FCER1G) from Cavia porcellus (Guinea pig).